The primary structure comprises 490 residues: GTPase Der (490 aa).

2 consecutive EngA-type G domains span residues 3-166 (PVVA…MDDV) and 203-376 (IKLA…DSST). GTP is bound by residues 9–16 (GRPNVGKS), 56–60 (DTGGI), 118–121 (NKTD), 209–216 (GRPNVGKS), 256–260 (DTAGV), and 321–324 (NKWD). Residues 377–461 (RRVSTAMLTR…PIRIQFKEGE (85 aa)) enclose the KH-like domain.

The protein belongs to the TRAFAC class TrmE-Era-EngA-EngB-Septin-like GTPase superfamily. EngA (Der) GTPase family. As to quaternary structure, associates with the 50S ribosomal subunit.

Its function is as follows. GTPase that plays an essential role in the late steps of ribosome biogenesis. The chain is GTPase Der from Salmonella choleraesuis (strain SC-B67).